The chain runs to 207 residues: Flavin-dependent thymidylate synthase (207 aa).

Residues 1-204 (MQITLLFHTP…KFIFEHCLHK (204 aa)) enclose the ThyX domain. FAD is bound by residues Ser50 and 74-76 (RHR). DUMP is bound by residues 71–74 (EVAR), 84–86 (STR), and Lys143. The ThyX motif signature appears at 74–84 (RHRHTSPSVKS). FAD is bound by residues 159 to 161 (NAR) and Asn165. Position 170 (Arg170) interacts with dUMP. The Involved in ionization of N3 of dUMP, leading to its activation role is filled by Arg170.

The protein belongs to the thymidylate synthase ThyX family. Homotetramer. Requires FAD as cofactor.

The catalysed reaction is dUMP + (6R)-5,10-methylene-5,6,7,8-tetrahydrofolate + NADPH + H(+) = dTMP + (6S)-5,6,7,8-tetrahydrofolate + NADP(+). It participates in pyrimidine metabolism; dTTP biosynthesis. In terms of biological role, catalyzes the reductive methylation of 2'-deoxyuridine-5'-monophosphate (dUMP) to 2'-deoxythymidine-5'-monophosphate (dTMP) while utilizing 5,10-methylenetetrahydrofolate (mTHF) as the methyl donor, and NADPH and FADH(2) as the reductant. This is Flavin-dependent thymidylate synthase from Campylobacter jejuni subsp. jejuni serotype O:2 (strain ATCC 700819 / NCTC 11168).